Reading from the N-terminus, the 165-residue chain is Chorismate pyruvate-lyase (165 aa).

Positions 35, 77, 115, and 156 each coordinate substrate.

The protein belongs to the UbiC family. As to quaternary structure, monomer.

Its subcellular location is the cytoplasm. The catalysed reaction is chorismate = 4-hydroxybenzoate + pyruvate. It participates in cofactor biosynthesis; ubiquinone biosynthesis. In terms of biological role, removes the pyruvyl group from chorismate, with concomitant aromatization of the ring, to provide 4-hydroxybenzoate (4HB) for the ubiquinone pathway. In Shigella boydii serotype 18 (strain CDC 3083-94 / BS512), this protein is Chorismate pyruvate-lyase.